We begin with the raw amino-acid sequence, 323 residues long: Di/tripeptide transport ATP-binding protein DppF (323 aa).

An ABC transporter domain is found at 5–254 (LTARDLTRHY…PLHPYTRALL (250 aa)). 47–54 (GESGCGKS) is an ATP binding site.

Belongs to the ABC transporter superfamily. As to quaternary structure, the complex is composed of two ATP-binding proteins (DppD and DppF), two transmembrane proteins (DppB and DppC) and a solute-binding protein (DppA1-A5). Five orthologous SBPs (DppA1-A5) are present in P.aeruginosa, which increases the substrate specificity of the DppBCDF transporter.

It localises to the cell inner membrane. It catalyses the reaction a dipeptide(out) + ATP + H2O = a dipeptide(in) + ADP + phosphate + H(+). Part of the ABC transporter DppABCDF involved in the uptake of various di/tripeptides. Is also involved in the uptake of phaseolotoxin, a toxic tripeptide inhibiting the enzyme ornithine carbamoyltransferase. Responsible for energy coupling to the transport system. This Pseudomonas aeruginosa (strain UCBPP-PA14) protein is Di/tripeptide transport ATP-binding protein DppF.